The following is a 297-amino-acid chain: uncharacterized protein (297 aa).

The protein belongs to the metallo-dependent hydrolases superfamily.

This is an uncharacterized protein from Sinorhizobium fredii (strain NBRC 101917 / NGR234).